The sequence spans 213 residues: MAIDKSIPKATAKRLSLYYRIFKRFYADQVEKASSKQIADAMGIDSATVRRDFSYFGELGRRGFGYDVTKLMNFFADLLNDHSTTNVLLVGCGNIGRALLHYRFHDRNKMQISMGFDVDDHPMVGTKTADGIPIYGISTINDHVKKADIETAILTVPSTHAQEVADQLIEAGIRGILSFSPVHLQVPKGIIVQYVDLTSELQTLLYFMNQSQD.

Positions 17-56 (LYYRIFKRFYADQVEKASSKQIADAMGIDSATVRRDFSYF) form a DNA-binding region, H-T-H motif. Position 91–96 (91–96 (GCGNIG)) interacts with NAD(+).

Belongs to the transcriptional regulatory Rex family. As to quaternary structure, homodimer.

It localises to the cytoplasm. Its function is as follows. Modulates transcription in response to changes in cellular NADH/NAD(+) redox state. This chain is Redox-sensing transcriptional repressor Rex, found in Streptococcus uberis (strain ATCC BAA-854 / 0140J).